Here is a 556-residue protein sequence, read N- to C-terminus: Protein trichome birefringence-like 1 (556 aa).

The helical; Signal-anchor for type II membrane protein transmembrane segment at 38-58 threads the bilayer; the sequence is TFVYAFVVTFVALTVFLAFSP. Positions 269 to 271 match the GDS motif motif; the sequence is GDS. Positions 514 to 528 match the DCXHWCLPGXXDXWN motif motif; that stretch reads DCSHWCLPGVPDSWN.

The protein belongs to the PC-esterase family. TBL subfamily. Not expressed in trichomes.

It localises to the membrane. Functionally, can complement TBR and is therefore functionally equivalent, but may work in different tissue. May act as a bridging protein that binds pectin and other cell wall polysaccharides. Probably involved in maintaining esterification of pectins. May be involved in the specific O-acetylation of cell wall polymers. The chain is Protein trichome birefringence-like 1 (TBL1) from Arabidopsis thaliana (Mouse-ear cress).